The chain runs to 303 residues: Geranylgeranyl pyrophosphate synthase (303 aa).

Isopentenyl diphosphate-binding residues include Lys-32, Arg-35, and His-64. 2 residues coordinate Mg(2+): Asp-71 and Asp-75. A dimethylallyl diphosphate-binding site is contributed by Arg-80. Position 81 (Arg-81) interacts with isopentenyl diphosphate. Positions 158, 159, 192, 209, and 219 each coordinate dimethylallyl diphosphate.

This sequence belongs to the FPP/GGPP synthase family. In terms of assembly, homooligomer. It depends on Mg(2+) as a cofactor.

It localises to the cytoplasm. The enzyme catalyses isopentenyl diphosphate + dimethylallyl diphosphate = (2E)-geranyl diphosphate + diphosphate. The catalysed reaction is isopentenyl diphosphate + (2E)-geranyl diphosphate = (2E,6E)-farnesyl diphosphate + diphosphate. It catalyses the reaction isopentenyl diphosphate + (2E,6E)-farnesyl diphosphate = (2E,6E,10E)-geranylgeranyl diphosphate + diphosphate. Its pathway is isoprenoid biosynthesis; farnesyl diphosphate biosynthesis; farnesyl diphosphate from geranyl diphosphate and isopentenyl diphosphate: step 1/1. The protein operates within isoprenoid biosynthesis; geranyl diphosphate biosynthesis; geranyl diphosphate from dimethylallyl diphosphate and isopentenyl diphosphate: step 1/1. It functions in the pathway isoprenoid biosynthesis; geranylgeranyl diphosphate biosynthesis; geranylgeranyl diphosphate from farnesyl diphosphate and isopentenyl diphosphate: step 1/1. Catalyzes the trans-addition of the three molecules of IPP onto DMAPP to form geranylgeranyl pyrophosphate, an important precursor of carotenoids and geranylated proteins. This is Geranylgeranyl pyrophosphate synthase (ggps1) from Dictyostelium discoideum (Social amoeba).